A 268-amino-acid polypeptide reads, in one-letter code: Putative S-adenosyl-L-methionine-dependent methyltransferase MAP_0663 (268 aa).

Residues aspartate 124 and 153–154 (DL) each bind S-adenosyl-L-methionine.

Belongs to the UPF0677 family.

Its function is as follows. Exhibits S-adenosyl-L-methionine-dependent methyltransferase activity. The chain is Putative S-adenosyl-L-methionine-dependent methyltransferase MAP_0663 from Mycolicibacterium paratuberculosis (strain ATCC BAA-968 / K-10) (Mycobacterium paratuberculosis).